Here is a 281-residue protein sequence, read N- to C-terminus: Nuclear transcription factor Y subunit nfya-2 (281 aa).

Disordered regions lie at residues 1 to 27 (MNPRGNPSKMPTQIVLNRRPAAPARPQ) and 163 to 261 (REMR…VQEE). Residues 150-173 (MVNPRQYKRIIKRREMRQKMEDSG) carry the Subunit association domain (SAD) motif. Over residues 166–188 (RQKMEDSGRLPLERQKYMHESRR) the composition is skewed to basic and acidic residues. Residues 180 to 204 (QKYMHESRRQHALKRRRTGGRFDAN) constitute a DNA-binding region (NFYA/HAP2-type). A compositionally biased stretch (basic residues) spans 189–198 (QHALKRRRTG). Residues 204-220 (NAEAAAASSEPSISSAA) show a composition bias toward low complexity.

This sequence belongs to the NFYA/HAP2 subunit family. In terms of assembly, forms a heterotrimeric transcription factor complex (nfya-2-NF-Y complex) composed of nfya-2, nfyb-1 and nfyc-1. Interacts with the nfyb-1 and nfyc-1 dimer; the interaction is required for subsequent binding to the 5'-CCAAT-3' box motif in DNA. Does not interact with either nfyb-1 or nfyc-1 in their monomeric form. Highly expressed in certain parts of the gonads. Expressed in the spermatheca, intestine and in some neurons in the head. Not expressed in the intestine, the hypodermis, body wall muscle surrounding the pseudocoelomic space, secretory cells in the pharyngeal terminal bulb wall, in the small ganglia surrounding the pharynx and in the neurons running anteriorly to the sensory organs in the head.

The protein resides in the nucleus. Component of the sequence-specific heterotrimeric transcription factor (nfya-2-NF-Y) which specifically recognizes a 5'-CCAAT-3' box motif found in the promoters of its target genes to regulate their expression and control cellular identity in particular tissue types. In association with the components in the nfya-2-NF-Y complex, may repress the expression of the T-box transcription factor tbx-2 throughout larval development, which most likely restricts its expression to certain tissues. The sequence is that of Nuclear transcription factor Y subunit nfya-2 from Caenorhabditis elegans.